We begin with the raw amino-acid sequence, 73 residues long: MQFADWLHPSGWTIEILNAYGMGDRKRTNSMSKEAFTPEQLHLEKELGEMRLRPTVLHSQTDHQGFRPIPMMQ.

This is an uncharacterized protein from Homo sapiens (Human).